Here is a 369-residue protein sequence, read N- to C-terminus: Anhydro-N-acetylmuramic acid kinase (369 aa).

12 to 19 (GTSLDGVD) is a binding site for ATP.

The protein belongs to the anhydro-N-acetylmuramic acid kinase family.

The catalysed reaction is 1,6-anhydro-N-acetyl-beta-muramate + ATP + H2O = N-acetyl-D-muramate 6-phosphate + ADP + H(+). The protein operates within amino-sugar metabolism; 1,6-anhydro-N-acetylmuramate degradation. It functions in the pathway cell wall biogenesis; peptidoglycan recycling. In terms of biological role, catalyzes the specific phosphorylation of 1,6-anhydro-N-acetylmuramic acid (anhMurNAc) with the simultaneous cleavage of the 1,6-anhydro ring, generating MurNAc-6-P. Is required for the utilization of anhMurNAc either imported from the medium or derived from its own cell wall murein, and thus plays a role in cell wall recycling. The chain is Anhydro-N-acetylmuramic acid kinase from Shigella flexneri.